We begin with the raw amino-acid sequence, 404 residues long: S-adenosylmethionine synthase (404 aa).

Position 139–144 (139–144) interacts with ATP; that stretch reads GKGSTD.

The protein belongs to the AdoMet synthase 2 family. Mg(2+) serves as cofactor.

The enzyme catalyses L-methionine + ATP + H2O = S-adenosyl-L-methionine + phosphate + diphosphate. It participates in amino-acid biosynthesis; S-adenosyl-L-methionine biosynthesis; S-adenosyl-L-methionine from L-methionine: step 1/1. In terms of biological role, catalyzes the formation of S-adenosylmethionine from methionine and ATP. The chain is S-adenosylmethionine synthase from Saccharolobus islandicus (strain L.S.2.15 / Lassen #1) (Sulfolobus islandicus).